A 38-amino-acid polypeptide reads, in one-letter code: Photosystem II reaction center protein L (38 aa).

The helical transmembrane segment at 17-37 (SLYWGLLLIFVLAVLFSSYFF) threads the bilayer.

Belongs to the PsbL family. As to quaternary structure, PSII is composed of 1 copy each of membrane proteins PsbA, PsbB, PsbC, PsbD, PsbE, PsbF, PsbH, PsbI, PsbJ, PsbK, PsbL, PsbM, PsbT, PsbX, PsbY, PsbZ, Psb30/Ycf12, at least 3 peripheral proteins of the oxygen-evolving complex and a large number of cofactors. It forms dimeric complexes.

The protein resides in the plastid. Its subcellular location is the chloroplast thylakoid membrane. Its function is as follows. One of the components of the core complex of photosystem II (PSII). PSII is a light-driven water:plastoquinone oxidoreductase that uses light energy to abstract electrons from H(2)O, generating O(2) and a proton gradient subsequently used for ATP formation. It consists of a core antenna complex that captures photons, and an electron transfer chain that converts photonic excitation into a charge separation. This subunit is found at the monomer-monomer interface and is required for correct PSII assembly and/or dimerization. This chain is Photosystem II reaction center protein L, found in Ephedra sinica (Chinese ephedra).